The following is a 398-amino-acid chain: Homeobox protein knotted-1-like 1 (398 aa).

3 disordered regions span residues 20 to 61 (SPIS…HHHQ), 78 to 102 (NCFR…ASSS), and 241 to 273 (LNNP…EIDP). Positions 23 to 56 (SSSNKNDNTSDTNNNNNNNNSSNYGPGYNNTNNN) are enriched in low complexity. Positions 87–102 (PNNNNNPSVKSEASSS) are enriched in polar residues. Residues 279 to 299 (ELKNHLLKKYSGYLSSLKQEL) enclose the ELK domain. Positions 300–363 (SKKKKKGKLP…NQRKRHWKPS (64 aa)) form a DNA-binding region, homeobox; TALE-type.

Belongs to the TALE/KNOX homeobox family. May form heterodimeric complex with the TALE/BELL proteins BEL1, BLH2, BLH8/PNF and BLH9/PNY. Interacts with OFP1, OFP2, OFP4, OFP6 and OFP12. Interacts with CCT7 and CCT8. Interacts with KNATM-B. Binds to AGO10/PNH. Interacts with BZIP30. In terms of tissue distribution, expressed in the vegetative meristem. Present in the base of flower primordia.

Its subcellular location is the nucleus. May play a role in meristem function, and may be involved in maintaining cells in an undifferentiated, meristematic state, and its expression disappears at the same time the shoot apex undergoes the transition from vegetative to reproductive development. Positive regulator of LATERAL ORGAN BOUNDARIES (LOB). Probably binds to the DNA sequence 5'-TGAC-3'. Able to traffic from the L1 to the L2/L3 layers of the meristem, presumably through plasmodesmata. The polypeptide is Homeobox protein knotted-1-like 1 (KNAT1) (Arabidopsis thaliana (Mouse-ear cress)).